The primary structure comprises 149 residues: Large ribosomal subunit protein uL13 (149 aa).

Belongs to the universal ribosomal protein uL13 family. In terms of assembly, part of the 50S ribosomal subunit.

This protein is one of the early assembly proteins of the 50S ribosomal subunit, although it is not seen to bind rRNA by itself. It is important during the early stages of 50S assembly. This is Large ribosomal subunit protein uL13 from Chlamydia pneumoniae (Chlamydophila pneumoniae).